We begin with the raw amino-acid sequence, 225 residues long: Peptidyl-tRNA hydrolase (225 aa).

Y14 provides a ligand contact to tRNA. The active-site Proton acceptor is H19. Positions 64, 66, and 112 each coordinate tRNA. Residues 187–225 form a disordered region; that stretch reads MQPPKPEKPKGEAKPAAPEAPEAAPDTRSALQRLADRFR. The segment covering 200 to 210 has biased composition (low complexity); the sequence is KPAAPEAPEAA.

Belongs to the PTH family. In terms of assembly, monomer.

It localises to the cytoplasm. It catalyses the reaction an N-acyl-L-alpha-aminoacyl-tRNA + H2O = an N-acyl-L-amino acid + a tRNA + H(+). Its function is as follows. Hydrolyzes ribosome-free peptidyl-tRNAs (with 1 or more amino acids incorporated), which drop off the ribosome during protein synthesis, or as a result of ribosome stalling. Functionally, catalyzes the release of premature peptidyl moieties from peptidyl-tRNA molecules trapped in stalled 50S ribosomal subunits, and thus maintains levels of free tRNAs and 50S ribosomes. The chain is Peptidyl-tRNA hydrolase from Cereibacter sphaeroides (strain ATCC 17025 / ATH 2.4.3) (Rhodobacter sphaeroides).